The primary structure comprises 170 residues: Adenine phosphoribosyltransferase (170 aa).

It belongs to the purine/pyrimidine phosphoribosyltransferase family. In terms of assembly, homodimer.

Its subcellular location is the cytoplasm. The enzyme catalyses AMP + diphosphate = 5-phospho-alpha-D-ribose 1-diphosphate + adenine. It participates in purine metabolism; AMP biosynthesis via salvage pathway; AMP from adenine: step 1/1. Its function is as follows. Catalyzes a salvage reaction resulting in the formation of AMP, that is energically less costly than de novo synthesis. This is Adenine phosphoribosyltransferase from Bacillus mycoides (strain KBAB4) (Bacillus weihenstephanensis).